The sequence spans 21 residues: KNGTVKWFNAEKGFGFITSED.

Residues 1–21 (KNGTVKWFNAEKGFGFITSED) enclose the CSD domain.

The protein resides in the cytoplasm. The chain is Cold shock protein CspSt from Streptococcus thermophilus.